Consider the following 184-residue polypeptide: UPF0149 protein PSPTO_5224 (184 aa).

The protein belongs to the UPF0149 family.

This Pseudomonas syringae pv. tomato (strain ATCC BAA-871 / DC3000) protein is UPF0149 protein PSPTO_5224.